The following is a 190-amino-acid chain: Hypoxanthine/guanine phosphoribosyltransferase (190 aa).

The protein belongs to the purine/pyrimidine phosphoribosyltransferase family. Archaeal HPRT subfamily. As to quaternary structure, homodimer.

The protein resides in the cytoplasm. It carries out the reaction IMP + diphosphate = hypoxanthine + 5-phospho-alpha-D-ribose 1-diphosphate. The catalysed reaction is GMP + diphosphate = guanine + 5-phospho-alpha-D-ribose 1-diphosphate. The protein operates within purine metabolism; IMP biosynthesis via salvage pathway; IMP from hypoxanthine: step 1/1. In terms of biological role, catalyzes a salvage reaction resulting in the formation of IMP that is energically less costly than de novo synthesis. This is Hypoxanthine/guanine phosphoribosyltransferase from Methanosarcina barkeri (strain Fusaro / DSM 804).